The following is a 288-amino-acid chain: MRGIILAGGSGTRLYPITMGISKQLLPVYDKPMIYYPLTTLMMAGIRDIQLITTPHDAPGFHRLLGDGAHLGVNISYATQDQPDGLAQAFVIGANHIGADSVALVLGDNIFYGPGLGTSLKRFQSISGGAIFAYWVANPSAYGVVEFGAEGMALSLEEKPVTPKSNYAVPGLYFYDNDVIEIARGLKKSARGEYEITEVNQVYLNQGRLAVEVLARGTAWLDTGTFDSLLDAADFVRTLERRQGLKVSIPEEVAWRMGWIDDEQLVQRARALVKSGYGNYLLELLERN.

Residue G8 coordinates dTDP-alpha-D-glucose. DTTP contacts are provided by G8, G11, T12, R13, K23, Q24, Q80, G85, and D108. DTDP-alpha-D-glucose contacts are provided by K23, Q24, Q80, G85, D108, N109, G143, E158, K159, V169, and D222. D108 lines the Mg(2+) pocket. Residue D222 participates in Mg(2+) binding.

It belongs to the glucose-1-phosphate thymidylyltransferase family. The cofactor is Mg(2+).

It catalyses the reaction dTTP + alpha-D-glucose 1-phosphate + H(+) = dTDP-alpha-D-glucose + diphosphate. It participates in carbohydrate biosynthesis; dTDP-L-rhamnose biosynthesis. In terms of biological role, catalyzes the conversion of glucose-1-phosphate and dTTP to dTDP-glucose and pyrophosphate. Involved in the biosynthesis of the dTDP-L-rhamnose which is a component of the critical linker, D-N-acetylglucosamine-L-rhamnose disaccharide, which connects the galactan region of arabinogalactan to peptidoglycan via a phosphodiester linkage. The protein is Glucose-1-phosphate thymidylyltransferase (rmlA) of Mycobacterium tuberculosis (strain CDC 1551 / Oshkosh).